Consider the following 550-residue polypeptide: Glucose-6-phosphate isomerase (550 aa).

The Proton donor role is filled by E355. Active-site residues include H386 and K512.

This sequence belongs to the GPI family.

It is found in the cytoplasm. The catalysed reaction is alpha-D-glucose 6-phosphate = beta-D-fructose 6-phosphate. It functions in the pathway carbohydrate biosynthesis; gluconeogenesis. Its pathway is carbohydrate degradation; glycolysis; D-glyceraldehyde 3-phosphate and glycerone phosphate from D-glucose: step 2/4. In terms of biological role, catalyzes the reversible isomerization of glucose-6-phosphate to fructose-6-phosphate. The chain is Glucose-6-phosphate isomerase from Rhodococcus opacus (strain B4).